Here is a 67-residue protein sequence, read N- to C-terminus: Small ribosomal subunit protein eS17 (67 aa).

Belongs to the eukaryotic ribosomal protein eS17 family. As to quaternary structure, part of the 30S ribosomal subunit.

In Thermococcus kodakarensis (strain ATCC BAA-918 / JCM 12380 / KOD1) (Pyrococcus kodakaraensis (strain KOD1)), this protein is Small ribosomal subunit protein eS17.